Consider the following 430-residue polypeptide: Enolase (430 aa).

Gln-167 contributes to the (2R)-2-phosphoglycerate binding site. The active-site Proton donor is the Glu-209. The Mg(2+) site is built by Asp-245, Glu-286, and Asp-313. (2R)-2-phosphoglycerate-binding residues include Lys-338, Arg-367, Ser-368, and Lys-389. Residue Lys-338 is the Proton acceptor of the active site.

This sequence belongs to the enolase family. The cofactor is Mg(2+).

Its subcellular location is the cytoplasm. It localises to the secreted. The protein localises to the cell surface. It carries out the reaction (2R)-2-phosphoglycerate = phosphoenolpyruvate + H2O. It participates in carbohydrate degradation; glycolysis; pyruvate from D-glyceraldehyde 3-phosphate: step 4/5. Its function is as follows. Catalyzes the reversible conversion of 2-phosphoglycerate (2-PG) into phosphoenolpyruvate (PEP). It is essential for the degradation of carbohydrates via glycolysis. The sequence is that of Enolase from Synechococcus sp. (strain WH7803).